The following is a 535-amino-acid chain: MTKFIFVTGGVVSSLGKGITAASLGRLLKDRGLKVTIQKFDPYLNVDPGTMSPYQHGEVFVTDDGAETDLDLGHYERFIDINLNKYSNVTAGKVYSHVLKKERRGDYLGGTVQVIPHITNEIKERLLLAGESTNADVVITEIGGTTGDIESLPFLEAIRQIRSDLGRENVMYVHCTLLPYIKAAGEMKTKPTQHSVKELRGLGIQPDLIVVRTEYEMTQDLKDKIALFCDIKKESVIECRDADSLYEIPLQLSKQNMDDIVIQRLQLNAKYETQLDEWKHLLNTVNNLDGKITIGLVGKYVSLQDAYLSVVESLKHAGYPFKKDVVVKWIDSSEVNDDNVEAYLSDVDGILVPGGFGFRASEGKIAAIRYARENNIPFFGICLGMQLATVEFARHVLGYEGAHSAELDPSTPYPIIDLLPEQKDIEDLGGTLRLGLYPCHIKEGTLAEKIYNKNDIEERHRHRYEFNNEFREQLESNGMVFSGTSPDGRLVEIIEIPKNDFFIACQFHPEFLSRPNRPQPIFKSFVEAALNYQQK.

The amidoligase domain stretch occupies residues 1 to 267 (MTKFIFVTGG…DDIVIQRLQL (267 aa)). CTP is bound at residue S13. S13 contributes to the UTP binding site. 14 to 19 (SLGKGI) serves as a coordination point for ATP. Y54 is an L-glutamine binding site. D71 lines the ATP pocket. 2 residues coordinate Mg(2+): D71 and E141. CTP is bound by residues 148–150 (DIE), 188–193 (KTKPTQ), and K224. UTP-binding positions include 188–193 (KTKPTQ) and K224. 240-242 (RDA) provides a ligand contact to ATP. Positions 293 to 535 (TIGLVGKYVS…VEAALNYQQK (243 aa)) constitute a Glutamine amidotransferase type-1 domain. G355 contributes to the L-glutamine binding site. Residue C382 is the Nucleophile; for glutamine hydrolysis of the active site. L-glutamine contacts are provided by residues 383–386 (LGMQ), E406, and R463. Residues H508 and E510 contribute to the active site.

It belongs to the CTP synthase family. In terms of assembly, homotetramer.

It carries out the reaction UTP + L-glutamine + ATP + H2O = CTP + L-glutamate + ADP + phosphate + 2 H(+). The catalysed reaction is L-glutamine + H2O = L-glutamate + NH4(+). The enzyme catalyses UTP + NH4(+) + ATP = CTP + ADP + phosphate + 2 H(+). It functions in the pathway pyrimidine metabolism; CTP biosynthesis via de novo pathway; CTP from UDP: step 2/2. With respect to regulation, allosterically activated by GTP, when glutamine is the substrate; GTP has no effect on the reaction when ammonia is the substrate. The allosteric effector GTP functions by stabilizing the protein conformation that binds the tetrahedral intermediate(s) formed during glutamine hydrolysis. Inhibited by the product CTP, via allosteric rather than competitive inhibition. Its function is as follows. Catalyzes the ATP-dependent amination of UTP to CTP with either L-glutamine or ammonia as the source of nitrogen. Regulates intracellular CTP levels through interactions with the four ribonucleotide triphosphates. The sequence is that of CTP synthase from Staphylococcus epidermidis (strain ATCC 35984 / DSM 28319 / BCRC 17069 / CCUG 31568 / BM 3577 / RP62A).